Here is a 284-residue protein sequence, read N- to C-terminus: NAD kinase (284 aa).

Residue aspartate 70 is the Proton acceptor of the active site. Residues 70–71 (DG), 139–140 (NE), lysine 167, aspartate 169, leucine 177, 180–185 (TAYNLS), and glutamine 236 contribute to the NAD(+) site.

Belongs to the NAD kinase family. A divalent metal cation serves as cofactor.

The protein resides in the cytoplasm. It catalyses the reaction NAD(+) + ATP = ADP + NADP(+) + H(+). Its function is as follows. Involved in the regulation of the intracellular balance of NAD and NADP, and is a key enzyme in the biosynthesis of NADP. Catalyzes specifically the phosphorylation on 2'-hydroxyl of the adenosine moiety of NAD to yield NADP. The polypeptide is NAD kinase (Helicobacter pylori (strain ATCC 700392 / 26695) (Campylobacter pylori)).